Reading from the N-terminus, the 267-residue chain is L-aspartate dehydrogenase (267 aa).

Positions 124 and 190 each coordinate NAD(+). H218 is a catalytic residue.

Belongs to the L-aspartate dehydrogenase family.

The catalysed reaction is L-aspartate + NADP(+) + H2O = oxaloacetate + NH4(+) + NADPH + H(+). It carries out the reaction L-aspartate + NAD(+) + H2O = oxaloacetate + NH4(+) + NADH + H(+). It participates in cofactor biosynthesis; NAD(+) biosynthesis; iminoaspartate from L-aspartate (dehydrogenase route): step 1/1. Its function is as follows. Specifically catalyzes the NAD or NADP-dependent dehydrogenation of L-aspartate to iminoaspartate. This is L-aspartate dehydrogenase from Methanocaldococcus jannaschii (strain ATCC 43067 / DSM 2661 / JAL-1 / JCM 10045 / NBRC 100440) (Methanococcus jannaschii).